Consider the following 636-residue polypeptide: Fructose-1,6-bisphosphatase class 3 (636 aa).

This sequence belongs to the FBPase class 3 family. Mn(2+) serves as cofactor.

The catalysed reaction is beta-D-fructose 1,6-bisphosphate + H2O = beta-D-fructose 6-phosphate + phosphate. Its pathway is carbohydrate biosynthesis; gluconeogenesis. The sequence is that of Fructose-1,6-bisphosphatase class 3 from Streptococcus sanguinis (strain SK36).